The following is a 101-amino-acid chain: MAKKSAIETNERRRKLATGHAAKRARLKAIVNDKTLPIEERFQATLKLAEMPRNGAKIRIRNRCEVTGRPRAFYRKLKMSRIALRELGNQGMVPGLVKSSW.

The segment covering 1–11 (MAKKSAIETNE) has biased composition (basic and acidic residues). A disordered region spans residues 1–20 (MAKKSAIETNERRRKLATGH).

It belongs to the universal ribosomal protein uS14 family. In terms of assembly, part of the 30S ribosomal subunit. Contacts proteins S3 and S10.

In terms of biological role, binds 16S rRNA, required for the assembly of 30S particles and may also be responsible for determining the conformation of the 16S rRNA at the A site. The polypeptide is Small ribosomal subunit protein uS14 (Xanthobacter autotrophicus (strain ATCC BAA-1158 / Py2)).